Consider the following 323-residue polypeptide: Probable proline iminopeptidase (323 aa).

Residues 37–301 (VVLHGGPGSR…VIVDEAGHDA (265 aa)) enclose the AB hydrolase-1 domain. Serine 114 serves as the catalytic Nucleophile. Residue aspartate 271 is part of the active site. Histidine 299 (proton donor) is an active-site residue.

The protein belongs to the peptidase S33 family.

The protein resides in the cytoplasm. It catalyses the reaction Release of N-terminal proline from a peptide.. In terms of biological role, specifically catalyzes the removal of N-terminal proline residues from peptides. The protein is Probable proline iminopeptidase of Streptomyces coelicolor (strain ATCC BAA-471 / A3(2) / M145).